The primary structure comprises 310 residues: GPN-loop GTPase 2 (310 aa).

Ala2 is subject to N-acetylalanine. A GTP-binding site is contributed by 19–24 (GSGKTT). The Gly-Pro-Asn (GPN)-loop; involved in dimer interface motif lies at 76–78 (GPN). 178–181 (SKMD) is a binding site for GTP.

This sequence belongs to the GPN-loop GTPase family. In terms of assembly, heterodimers with GPN1 or GPN3. Binds to RNA polymerase II (RNAPII).

Its function is as follows. Small GTPase required for proper localization of RNA polymerase II and III (RNAPII and RNAPIII). May act at an RNAP assembly step prior to nuclear import. The protein is GPN-loop GTPase 2 of Homo sapiens (Human).